Consider the following 125-residue polypeptide: uncharacterized protein (125 aa).

This is an uncharacterized protein from Homo sapiens (Human).